Reading from the N-terminus, the 431-residue chain is Na(+)-translocating NADH-quinone reductase subunit F (431 aa).

A helical transmembrane segment spans residues I10–L30. The 2Fe-2S ferredoxin-type domain maps to C41–Y133. [2Fe-2S] cluster contacts are provided by C76, C82, C85, and C117. The FAD-binding FR-type domain maps to A136–K286. Residues N289–L413 are catalytic.

The protein belongs to the NqrF family. In terms of assembly, composed of six subunits; NqrA, NqrB, NqrC, NqrD, NqrE and NqrF. [2Fe-2S] cluster serves as cofactor. FAD is required as a cofactor.

Its subcellular location is the cell inner membrane. It catalyses the reaction a ubiquinone + n Na(+)(in) + NADH + H(+) = a ubiquinol + n Na(+)(out) + NAD(+). NQR complex catalyzes the reduction of ubiquinone-1 to ubiquinol by two successive reactions, coupled with the transport of Na(+) ions from the cytoplasm to the periplasm. The first step is catalyzed by NqrF, which accepts electrons from NADH and reduces ubiquinone-1 to ubisemiquinone by a one-electron transfer pathway. This is Na(+)-translocating NADH-quinone reductase subunit F from Chlamydia trachomatis serovar D (strain ATCC VR-885 / DSM 19411 / UW-3/Cx).